The chain runs to 648 residues: Macrolide export ATP-binding/permease protein MacB (648 aa).

The ABC transporter domain maps to 5-243 (LELCNVSRSY…QGVDAAVVNT (239 aa)). 41-48 (GVSGSGKS) provides a ligand contact to ATP. 5 helical membrane passes run 273–293 (LLTM…VVVG), 417–437 (ANVV…IGVA), 523–543 (LFLT…VMNI), 577–597 (VLVC…IAFM), and 611–631 (LTAL…FGWL).

It belongs to the ABC transporter superfamily. Macrolide exporter (TC 3.A.1.122) family. Homodimer. Part of the tripartite efflux system MacAB-TolC, which is composed of an inner membrane transporter, MacB, a periplasmic membrane fusion protein, MacA, and an outer membrane component, TolC. The complex forms a large protein conduit and can translocate molecules across both the inner and outer membranes. Interacts with MacA.

It is found in the cell inner membrane. In terms of biological role, part of the tripartite efflux system MacAB-TolC. MacB is a non-canonical ABC transporter that contains transmembrane domains (TMD), which form a pore in the inner membrane, and an ATP-binding domain (NBD), which is responsible for energy generation. Confers resistance against macrolides. This is Macrolide export ATP-binding/permease protein MacB from Salmonella typhimurium (strain LT2 / SGSC1412 / ATCC 700720).